Here is a 591-residue protein sequence, read N- to C-terminus: Aspartate--tRNA ligase (591 aa).

E174 serves as a coordination point for L-aspartate. Positions 198 to 201 (QLFK) are aspartate. R220 serves as a coordination point for L-aspartate. ATP is bound by residues 220-222 (RDE) and Q229. H450 contributes to the L-aspartate binding site. ATP is bound at residue E486. L-aspartate is bound at residue R493. 538–541 (GLDR) is a binding site for ATP.

Belongs to the class-II aminoacyl-tRNA synthetase family. Type 1 subfamily. As to quaternary structure, homodimer.

The protein resides in the cytoplasm. The catalysed reaction is tRNA(Asp) + L-aspartate + ATP = L-aspartyl-tRNA(Asp) + AMP + diphosphate. Functionally, catalyzes the attachment of L-aspartate to tRNA(Asp) in a two-step reaction: L-aspartate is first activated by ATP to form Asp-AMP and then transferred to the acceptor end of tRNA(Asp). This chain is Aspartate--tRNA ligase, found in Leuconostoc mesenteroides subsp. mesenteroides (strain ATCC 8293 / DSM 20343 / BCRC 11652 / CCM 1803 / JCM 6124 / NCDO 523 / NBRC 100496 / NCIMB 8023 / NCTC 12954 / NRRL B-1118 / 37Y).